The chain runs to 117 residues: Large ribosomal subunit protein bL19 (117 aa).

Belongs to the bacterial ribosomal protein bL19 family.

In terms of biological role, this protein is located at the 30S-50S ribosomal subunit interface and may play a role in the structure and function of the aminoacyl-tRNA binding site. The sequence is that of Large ribosomal subunit protein bL19 from Aliivibrio salmonicida (strain LFI1238) (Vibrio salmonicida (strain LFI1238)).